The primary structure comprises 132 residues: Small ribosomal subunit protein uS8 (132 aa).

Belongs to the universal ribosomal protein uS8 family. In terms of assembly, part of the 30S ribosomal subunit. Contacts proteins S5 and S12.

One of the primary rRNA binding proteins, it binds directly to 16S rRNA central domain where it helps coordinate assembly of the platform of the 30S subunit. This chain is Small ribosomal subunit protein uS8, found in Shouchella clausii (strain KSM-K16) (Alkalihalobacillus clausii).